The following is a 280-amino-acid chain: Large ribosomal subunit protein uL2 (280 aa).

Residues 229–280 (DHPHGGGEGKAPIGHPSPLTPWGKPTLGYKTRKKRKPSDRFIIQRANDKKEK) are disordered.

Belongs to the universal ribosomal protein uL2 family. As to quaternary structure, part of the 50S ribosomal subunit. Forms a bridge to the 30S subunit in the 70S ribosome.

One of the primary rRNA binding proteins. Required for association of the 30S and 50S subunits to form the 70S ribosome, for tRNA binding and peptide bond formation. It has been suggested to have peptidyltransferase activity; this is somewhat controversial. Makes several contacts with the 16S rRNA in the 70S ribosome. In Dictyoglomus turgidum (strain DSM 6724 / Z-1310), this protein is Large ribosomal subunit protein uL2.